A 159-amino-acid polypeptide reads, in one-letter code: MRGPLSAWLVKHGLVHRSLGFDYQGIETLQIKPEDWHSIAVILYVYGYNYLRSQCAYDVAPGGLLASIYHLTRIEYGILDQPEEVCIKVFAPRKNPRIPSVFWVWKSADFQERESYDMLGISYDNHPRLKRILMPESWIGWPLRKDYIAPNFYEIQDAH.

This sequence belongs to the complex I 30 kDa subunit family. As to quaternary structure, NDH is composed of at least 16 different subunits, 5 of which are encoded in the nucleus.

The protein localises to the plastid. The protein resides in the chloroplast thylakoid membrane. The enzyme catalyses a plastoquinone + NADH + (n+1) H(+)(in) = a plastoquinol + NAD(+) + n H(+)(out). It catalyses the reaction a plastoquinone + NADPH + (n+1) H(+)(in) = a plastoquinol + NADP(+) + n H(+)(out). Its function is as follows. NDH shuttles electrons from NAD(P)H:plastoquinone, via FMN and iron-sulfur (Fe-S) centers, to quinones in the photosynthetic chain and possibly in a chloroplast respiratory chain. The immediate electron acceptor for the enzyme in this species is believed to be plastoquinone. Couples the redox reaction to proton translocation, and thus conserves the redox energy in a proton gradient. The chain is NAD(P)H-quinone oxidoreductase subunit J, chloroplastic from Populus trichocarpa (Western balsam poplar).